A 243-amino-acid polypeptide reads, in one-letter code: Probable fructoselysine utilization operon transcriptional repressor (243 aa).

An HTH gntR-type domain is found at 10 to 78; it reads QLLYATVRQR…QGKGTFVQSQ (69 aa). The segment at residues 38 to 57 is a DNA-binding region (H-T-H motif); that stretch reads ENELCTQYNVSRITIRKAIS.

Its pathway is carbohydrate metabolism; fructoselysine degradation [regulation]. May regulate the transcription of the frlABCDR operon, involved in the utilization of fructoselysine and psicoselysine. This is Probable fructoselysine utilization operon transcriptional repressor (frlR) from Escherichia coli O157:H7.